We begin with the raw amino-acid sequence, 393 residues long: Elongation factor Tu (393 aa).

The tr-type G domain occupies 10–203 (KPHVNIGTIG…AVDSYIPEPV (194 aa)). Residues 19 to 26 (GHVDHGKT) form a G1 region. Residue 19 to 26 (GHVDHGKT) participates in GTP binding. Residue Thr-26 participates in Mg(2+) binding. Positions 60-64 (GITIS) are G2. Positions 81-84 (DCPG) are G3. GTP is bound by residues 81 to 85 (DCPGH) and 136 to 139 (NKVD). The tract at residues 136–139 (NKVD) is G4. The G5 stretch occupies residues 173–175 (SAL).

Belongs to the TRAFAC class translation factor GTPase superfamily. Classic translation factor GTPase family. EF-Tu/EF-1A subfamily. In terms of assembly, monomer.

It is found in the cytoplasm. It carries out the reaction GTP + H2O = GDP + phosphate + H(+). Functionally, GTP hydrolase that promotes the GTP-dependent binding of aminoacyl-tRNA to the A-site of ribosomes during protein biosynthesis. This Prosthecochloris aestuarii (strain DSM 271 / SK 413) protein is Elongation factor Tu.